We begin with the raw amino-acid sequence, 507 residues long: Photosystem II CP47 reaction center protein (507 aa).

At 2 to 16 (GLPWYRVHTVVLNDP) the chain is on the cytoplasmic side. Residues 17 to 39 (GRLISVHLMHTALVAGWAGSMAL) form a helical membrane-spanning segment. The Lumenal, thylakoid portion of the chain corresponds to 40-94 (YELAIFDSSDAVLNPMWRQGMFVLPFMARLGVTSSWNGWSVTGETGLDPGFWSFE). The chain crosses the membrane as a helical span at residues 95 to 116 (GVAAAHIVLSGLLFLAAVWHWV). Residues 117 to 134 (FWDLELFVDPRTGESALD) are Cytoplasmic-facing. A helical transmembrane segment spans residues 135–159 (LPKMFGIHLFLSGLLCFGFGAFHLT). Topologically, residues 160–196 (GVWGPGMWVSDPYGLTGHVQPVAPEWGPAGFNPFNPG) are lumenal, thylakoid. Residues 197–218 (GVVAHHIAAGIVGIIAGLFHLT) traverse the membrane as a helical segment. The Cytoplasmic portion of the chain corresponds to 219-233 (VRPPERLYKALRMGN). A helical transmembrane segment spans residues 234–255 (IETVLSSSIAAVFFAAFVVAGT). The Lumenal, thylakoid portion of the chain corresponds to 256 to 450 (MWYGNATTPI…GVFRTSPRGW (195 aa)). A helical transmembrane segment spans residues 451–474 (FTFGHAVFALLFFFGHIWHGSRTL). Topologically, residues 475–507 (FRDVFAGVDPGLEEQVEFGVFAKVGDLSTRKEA) are cytoplasmic.

It belongs to the PsbB/PsbC family. PsbB subfamily. PSII is composed of 1 copy each of membrane proteins PsbA, PsbB, PsbC, PsbD, PsbE, PsbF, PsbH, PsbI, PsbJ, PsbK, PsbL, PsbM, PsbT, PsbX, Psb30/Ycf12, peripheral proteins PsbO, CyanoQ (PsbQ), PsbU, PsbV and a large number of cofactors. It forms dimeric complexes. Contacts PsbQ. It depends on Binds multiple chlorophylls. PSII binds additional chlorophylls, carotenoids and specific lipids. as a cofactor.

It localises to the cellular thylakoid membrane. Functionally, one of the components of the core complex of photosystem II (PSII). It binds chlorophyll and helps catalyze the primary light-induced photochemical processes of PSII. PSII is a light-driven water:plastoquinone oxidoreductase, using light energy to abstract electrons from H(2)O, generating O(2) and a proton gradient subsequently used for ATP formation. The chain is Photosystem II CP47 reaction center protein from Synechocystis sp. (strain ATCC 27184 / PCC 6803 / Kazusa).